We begin with the raw amino-acid sequence, 129 residues long: Large ribosomal subunit protein uL22 (129 aa).

It belongs to the universal ribosomal protein uL22 family. As to quaternary structure, part of the 50S ribosomal subunit.

Its function is as follows. This protein binds specifically to 23S rRNA; its binding is stimulated by other ribosomal proteins, e.g. L4, L17, and L20. It is important during the early stages of 50S assembly. It makes multiple contacts with different domains of the 23S rRNA in the assembled 50S subunit and ribosome. In terms of biological role, the globular domain of the protein is located near the polypeptide exit tunnel on the outside of the subunit, while an extended beta-hairpin is found that lines the wall of the exit tunnel in the center of the 70S ribosome. In Beijerinckia indica subsp. indica (strain ATCC 9039 / DSM 1715 / NCIMB 8712), this protein is Large ribosomal subunit protein uL22.